The sequence spans 881 residues: Receptor-like protein 41 (881 aa).

A signal peptide spans 1 to 21; the sequence is MSELLLRLNFLLLLLLSCVSP. The Extracellular segment spans residues 22–844; it reads SSFVTFNNPV…EEQEQVLNWE (823 aa). Residues Asn-58, Asn-70, Asn-91, Asn-109, and Asn-145 are each glycosylated (N-linked (GlcNAc...) asparagine). LRR repeat units lie at residues 97–121, 122–145, 146–169, 170–195, 197–219, 220–244, 245–267, 268–291, 293–317, 319–340, 342–364, 365–390, 391–412, 413–437, 439–462, and 463–486; these read FHEL…KFGM, LNKL…SFSN, LSML…VRNL, RKLR…LFEL, HLTY…EFGN, LNKL…ISNL, TQLT…VQNL, TKLS…LFTM, FLSY…SSSS, LESL…ISKL, NLKE…LFSS, FKSL…SYIS, LTLE…ILKS, LPNL…LWSL, RLSS…ILVN, and SSVQ…PLSI. A glycan (N-linked (GlcNAc...) asparagine) is linked at Asn-189. N-linked (GlcNAc...) asparagine glycans are attached at residues Asn-243 and Asn-266. 2 N-linked (GlcNAc...) asparagine glycosylation sites follow: Asn-305 and Asn-312. Asn-402 carries N-linked (GlcNAc...) asparagine glycosylation. The N-linked (GlcNAc...) asparagine glycan is linked to Asn-462. The stretch at 487–506 is one LRR 17; degenerate repeat; sequence IYFSARYNRFKGDIPLSICN. 2 N-linked (GlcNAc...) asparagine glycosylation sites follow: Asn-506 and Asn-519. 10 LRR repeats span residues 507–528, 529–552, 554–576, 578–599, 600–624, 627–651, 701–724, 725–748, 749–772, and 774–797; these read RSSL…PPCL, SNLL…YFAD, PLRS…LLNC, ALQF…YLKV, LPKL…NQGS, FPEL…FFVN, TSSA…IGLL, KALI…LANL, VKIE…LGTL, and FLAY…QITG. Asn-575 is a glycosylation site (N-linked (GlcNAc...) asparagine). The N-linked (GlcNAc...) asparagine glycan is linked to Asn-731. Asn-779 is a glycosylation site (N-linked (GlcNAc...) asparagine). The helical transmembrane segment at 845–865 threads the bilayer; it reads GVAIGYGVGVLLGLAIAQLIA. Residues 866–881 lie on the Cytoplasmic side of the membrane; that stretch reads SYKPEWLACLIKSRNR.

It belongs to the RLP family.

Its subcellular location is the cell membrane. Its function is as follows. May be involved in ABA-induced senescence responses. The protein is Receptor-like protein 41 of Arabidopsis thaliana (Mouse-ear cress).